The chain runs to 859 residues: Envelope glycoprotein gp160 (859 aa).

The first 23 residues, 1–23 (MAYFSSRLPIALLLIGISGFVCK), serve as a signal peptide directing secretion. Residues 24 to 678 (QYVTVFYGIP…WFDLTSWIKY (655 aa)) are Extracellular-facing. Asn37 is a glycosylation site (N-linked (GlcNAc...) asparagine; by host). Cys44 and Cys57 form a disulfide bridge. Asn70, Asn112, Asn122, Asn142, Asn150, Asn165, Asn191, Asn206, Asn238, Asn241, Asn248, Asn272, Asn278, Asn289, Asn300, Asn310, Asn343, Asn367, Asn400, Asn410, Asn413, Asn450, Asn464, and Asn468 each carry an N-linked (GlcNAc...) asparagine; by host glycan. 5 disulfides stabilise this stretch: Cys101–Cys214, Cys108–Cys205, Cys113–Cys164, Cys227–Cys257, and Cys237–Cys249. The segment at 113-163 (CSKTETNPGNASSTTTTKPTTTSRGLKTINETDPCIKNDSCTGLGEEEIMQ) is V1. Positions 164-205 (CNFSMTGLRRDELKQYKDTWYSEDLECNNTRKYTSRCYIRTC) are V2. Residues 305-337 (CKRPGNKTVVPIRTVSGLLFHSQPINKRPRQAW) form a V3 region. An intrachain disulfide couples Cys305 to Cys338. 2 cysteine pairs are disulfide-bonded: Cys392/Cys449 and Cys399/Cys422. The V4 stretch occupies residues 399–422 (CNMTWFLNWVENKTNTTRRNYAPC). The V5 stretch occupies residues 465–471 (STTNISV). Positions 514–534 (GVMVLGFLGFLAMAGSAMGAT) are fusion peptide. Positions 577 to 593 (LQARVTAIEKYLKDQAQ) are immunosuppression. Asn613, Asn622, and Asn638 each carry an N-linked (GlcNAc...) asparagine; by host glycan. Residues 626–647 (QQWEKQVHFLDANITALLEEAQ) adopt a coiled-coil conformation. Residues 659–680 (KINSWDVFGNWFDLTSWIKYIH) form an MPER; binding to GalCer region. A helical transmembrane segment spans residues 679–699 (IHLGLYIVAGLVVLRIVVYIV). Topologically, residues 700 to 859 (QMLARLRKGY…IRQGLELTLL (160 aa)) are cytoplasmic. The YXXV motif; contains endocytosis signal motif lies at 709–712 (YRPV). Positions 715–744 (SPPSYTQQIPIRKDRGQPANEETEEGGGND) are disordered. Cys775 carries the S-palmitoyl cysteine; by host lipid modification. A Di-leucine internalization motif motif is present at residues 858-859 (LL).

The mature envelope protein (Env) consists of a homotrimer of non-covalently associated gp120-gp41 heterodimers. The resulting complex protrudes from the virus surface as a spike. There seems to be as few as 10 spikes on the average virion. Interacts with human CD4, CCR5 and CXCR4, to form a P4HB/PDI-CD4-CXCR4-gp120 complex. Gp120 also interacts with the C-type lectins CD209/DC-SIGN and CLEC4M/DC-SIGNR (collectively referred to as DC-SIGN(R)). Gp120 and gp41 interact with GalCer. In terms of assembly, the mature envelope protein (Env) consists of a homotrimer of non-covalently associated gp120-gp41 heterodimers. The resulting complex protrudes from the virus surface as a spike. There seems to be as few as 10 spikes on the average virion. In terms of processing, specific enzymatic cleavages in vivo yield mature proteins. Envelope glycoproteins are synthesized as an inactive precursor that is heavily N-glycosylated and processed likely by host cell furin in the Golgi to yield the mature SU and TM proteins. The cleavage site between SU and TM requires the minimal sequence [KR]-X-[KR]-R. Palmitoylation of the transmembrane protein and of Env polyprotein (prior to its proteolytic cleavage) is essential for their association with host cell membrane lipid rafts. Palmitoylation is therefore required for envelope trafficking to classical lipid rafts, but not for viral replication.

It is found in the virion membrane. Its subcellular location is the host cell membrane. It localises to the host endosome membrane. In terms of biological role, the surface protein gp120 (SU) attaches the virus to the host lymphoid cell by binding to the primary receptor CD4. This interaction induces a structural rearrangement creating a high affinity binding site for a chemokine coreceptor like CXCR4 and/or CCR5. This peculiar 2 stage receptor-interaction strategy allows gp120 to maintain the highly conserved coreceptor-binding site in a cryptic conformation, protected from neutralizing antibodies. Since CD4 also displays a binding site for the disulfide-isomerase P4HB/PDI, a P4HB/PDI-CD4-CXCR4-gp120 complex may form. In that complex, P4HB/PDI could reach and reduce gp120 disulfide bonds, causing major conformational changes in gp120. TXN, another PDI family member could also be involved in disulfide rearrangements in Env during fusion. These changes are transmitted to the transmembrane protein gp41 and are thought to activate its fusogenic potential by unmasking its fusion peptide. Functionally, the surface protein gp120 is a ligand for CD209/DC-SIGN and CLEC4M/DC-SIGNR, which are respectively found on dendritic cells (DCs), and on endothelial cells of liver sinusoids and lymph node sinuses. These interactions allow capture of viral particles at mucosal surfaces by these cells and subsequent transmission to permissive cells. DCs are professional antigen presenting cells, critical for host immunity by inducing specific immune responses against a broad variety of pathogens. They act as sentinels in various tissues where they take up antigen, process it, and present it to T-cells following migration to lymphoid organs. HIV subverts the migration properties of dendritic cells to gain access to CD4+ T-cells in lymph nodes. Virus transmission to permissive T-cells occurs either in trans (without DCs infection, through viral capture and transmission), or in cis (following DCs productive infection, through the usual CD4-gp120 interaction), thereby inducing a robust infection. In trans infection, bound virions remain infectious over days and it is proposed that they are not degraded, but protected in non-lysosomal acidic organelles within the DCs close to the cell membrane thus contributing to the viral infectious potential during DCs' migration from the periphery to the lymphoid tissues. On arrival at lymphoid tissues, intact virions recycle back to DCs' cell surface allowing virus transmission to CD4+ T-cells. Virion capture also seems to lead to MHC-II-restricted viral antigen presentation, and probably to the activation of HIV-specific CD4+ cells. Its function is as follows. The transmembrane protein gp41 (TM) acts as a class I viral fusion protein. Under the current model, the protein has at least 3 conformational states: pre-fusion native state, pre-hairpin intermediate state, and post-fusion hairpin state. During fusion of viral and target intracellular membranes, the coiled coil regions (heptad repeats) assume a trimer-of-hairpins structure, positioning the fusion peptide in close proximity to the C-terminal region of the ectodomain. The formation of this structure appears to drive apposition and subsequent fusion of viral and target cell membranes. Complete fusion occurs in host cell endosomes and is dynamin-dependent, however some lipid transfer might occur at the plasma membrane. The virus undergoes clathrin-dependent internalization long before endosomal fusion, thus minimizing the surface exposure of conserved viral epitopes during fusion and reducing the efficacy of inhibitors targeting these epitopes. Membranes fusion leads to delivery of the nucleocapsid into the cytoplasm. The envelope glycoprotein gp160 precursor down-modulates cell surface CD4 antigen by interacting with it in the endoplasmic reticulum and blocking its transport to the cell surface. In terms of biological role, the gp120-gp41 heterodimer seems to contribute to T-cell depletion during HIV-1 infection. The envelope glycoproteins expressed on the surface of infected cells induce apoptosis through an interaction with uninfected cells expressing the receptor (CD4) and the coreceptors CXCR4 or CCR5. This type of bystander killing may be obtained by at least three distinct mechanisms. First, the interaction between the 2 cells can induce cellular fusion followed by nuclear fusion within the syncytium. Syncytia are condemned to die from apoptosis. Second, the 2 interacting cells may not fuse entirely and simply exchange plasma membrane lipids, after a sort of hemifusion process, followed by rapid death. Third, it is possible that virus-infected cells, on the point of undergoing apoptosis, fuse with CD4-expressing cells, in which case apoptosis is rapidly transmitted from one cell to the other and thus occurs in a sort of contagious fashion. Functionally, the gp120-gp41 heterodimer allows rapid transcytosis of the virus through CD4 negative cells such as simple epithelial monolayers of the intestinal, rectal and endocervical epithelial barriers. Both gp120 and gp41 specifically recognize glycosphingolipids galactosyl-ceramide (GalCer) or 3' sulfo-galactosyl-ceramide (GalS) present in the lipid rafts structures of epithelial cells. Binding to these alternative receptors allows the rapid transcytosis of the virus through the epithelial cells. This transcytotic vesicle-mediated transport of virions from the apical side to the basolateral side of the epithelial cells does not involve infection of the cells themselves. The protein is Envelope glycoprotein gp160 (env) of Human immunodeficiency virus type 2 subtype B (isolate D205) (HIV-2).